The sequence spans 142 residues: Large ribosomal subunit protein uL11 (142 aa).

The protein belongs to the universal ribosomal protein uL11 family. In terms of assembly, part of the ribosomal stalk of the 50S ribosomal subunit. Interacts with L10 and the large rRNA to form the base of the stalk. L10 forms an elongated spine to which L12 dimers bind in a sequential fashion forming a multimeric L10(L12)X complex. One or more lysine residues are methylated.

Forms part of the ribosomal stalk which helps the ribosome interact with GTP-bound translation factors. This chain is Large ribosomal subunit protein uL11, found in Mesoplasma florum (strain ATCC 33453 / NBRC 100688 / NCTC 11704 / L1) (Acholeplasma florum).